Consider the following 460-residue polypeptide: Bifunctional protein GlmU (460 aa).

Residues Met-1–Arg-229 are pyrophosphorylase. Residues Leu-8–Gly-11, Lys-22, Gln-72, and Gly-77–Thr-78 contribute to the UDP-N-acetyl-alpha-D-glucosamine site. Asp-102 provides a ligand contact to Mg(2+). 4 residues coordinate UDP-N-acetyl-alpha-D-glucosamine: Gly-139, Glu-154, Asn-169, and Asn-227. Asn-227 is a Mg(2+) binding site. The interval Val-230–Asn-250 is linker. The N-acetyltransferase stretch occupies residues Gly-251–Lys-460. The UDP-N-acetyl-alpha-D-glucosamine site is built by Arg-332 and Lys-350. The active-site Proton acceptor is His-362. Positions 365 and 376 each coordinate UDP-N-acetyl-alpha-D-glucosamine. Residues Ala-379, Asn-385–Tyr-386, Ser-404, Ala-422, and Arg-439 each bind acetyl-CoA.

In the N-terminal section; belongs to the N-acetylglucosamine-1-phosphate uridyltransferase family. It in the C-terminal section; belongs to the transferase hexapeptide repeat family. As to quaternary structure, homotrimer. It depends on Mg(2+) as a cofactor.

It localises to the cytoplasm. It catalyses the reaction alpha-D-glucosamine 1-phosphate + acetyl-CoA = N-acetyl-alpha-D-glucosamine 1-phosphate + CoA + H(+). It carries out the reaction N-acetyl-alpha-D-glucosamine 1-phosphate + UTP + H(+) = UDP-N-acetyl-alpha-D-glucosamine + diphosphate. Its pathway is nucleotide-sugar biosynthesis; UDP-N-acetyl-alpha-D-glucosamine biosynthesis; N-acetyl-alpha-D-glucosamine 1-phosphate from alpha-D-glucosamine 6-phosphate (route II): step 2/2. The protein operates within nucleotide-sugar biosynthesis; UDP-N-acetyl-alpha-D-glucosamine biosynthesis; UDP-N-acetyl-alpha-D-glucosamine from N-acetyl-alpha-D-glucosamine 1-phosphate: step 1/1. It functions in the pathway bacterial outer membrane biogenesis; LPS lipid A biosynthesis. In terms of biological role, catalyzes the last two sequential reactions in the de novo biosynthetic pathway for UDP-N-acetylglucosamine (UDP-GlcNAc). The C-terminal domain catalyzes the transfer of acetyl group from acetyl coenzyme A to glucosamine-1-phosphate (GlcN-1-P) to produce N-acetylglucosamine-1-phosphate (GlcNAc-1-P), which is converted into UDP-GlcNAc by the transfer of uridine 5-monophosphate (from uridine 5-triphosphate), a reaction catalyzed by the N-terminal domain. This chain is Bifunctional protein GlmU, found in Streptococcus thermophilus (strain CNRZ 1066).